The sequence spans 852 residues: Protein SEY1 (852 aa).

Over Met1–Gln738 the chain is Cytoplasmic. The GB1/RHD3-type G domain occupies Gly47 to Tyr283. Residue Gly57 to Ser64 participates in GTP binding. Positions Gln475–Ile500 form a coiled coil. Residues Val739 to Leu759 traverse the membrane as a helical segment. The Lumenal portion of the chain corresponds to Arg760 to Pro762. The helical transmembrane segment at Met763–Leu783 threads the bilayer. Residues Leu784–Ile852 are Cytoplasmic-facing. The interval Arg825 to Ile852 is disordered. Basic and acidic residues predominate over residues Asp834–Glu845.

The protein belongs to the TRAFAC class dynamin-like GTPase superfamily. GB1/RHD3 GTPase family. RHD3 subfamily.

Its subcellular location is the endoplasmic reticulum membrane. Cooperates with the reticulon proteins and tubule-shaping DP1 family proteins to generate and maintain the structure of the tubular endoplasmic reticulum network. Has GTPase activity, which is required for its function in ER organization. The protein is Protein SEY1 of Chaetomium globosum (strain ATCC 6205 / CBS 148.51 / DSM 1962 / NBRC 6347 / NRRL 1970) (Soil fungus).